We begin with the raw amino-acid sequence, 394 residues long: Elongation factor Tu (394 aa).

Residues 10-204 (KPHVNVGTIG…ALDTYIPEPE (195 aa)) form the tr-type G domain. The G1 stretch occupies residues 19 to 26 (GHVDHGKT). Position 19-26 (19-26 (GHVDHGKT)) interacts with GTP. Thr-26 lines the Mg(2+) pocket. The tract at residues 60-64 (GITIN) is G2. The segment at 81-84 (DCPG) is G3. Residues 81 to 85 (DCPGH) and 136 to 139 (NKCD) each bind GTP. Residues 136 to 139 (NKCD) are G4. The G5 stretch occupies residues 174–176 (SAL).

It belongs to the TRAFAC class translation factor GTPase superfamily. Classic translation factor GTPase family. EF-Tu/EF-1A subfamily. As to quaternary structure, monomer.

It localises to the cytoplasm. The enzyme catalyses GTP + H2O = GDP + phosphate + H(+). In terms of biological role, GTP hydrolase that promotes the GTP-dependent binding of aminoacyl-tRNA to the A-site of ribosomes during protein biosynthesis. In Shewanella denitrificans (strain OS217 / ATCC BAA-1090 / DSM 15013), this protein is Elongation factor Tu.